The sequence spans 379 residues: Retron Se72 reverse transcriptase (379 aa).

The Reverse transcriptase domain maps to 1 to 245; it reads MNKPRFNGTP…SKLSVTGLWV (245 aa). Mg(2+) contacts are provided by aspartate 109, aspartate 188, and aspartate 189.

The protein belongs to the bacterial reverse transcriptase family.

It carries out the reaction DNA(n) + a 2'-deoxyribonucleoside 5'-triphosphate = DNA(n+1) + diphosphate. Functionally, reverse transcriptase (RT) component of antiviral defense system retron Se72, composed of a non-coding RNA (ncRNA), this reverse transcriptase (RT) and the following cold shock-like protein. Expression of retron Se72 confers protection against bacteriophage lambda. At multiplicity of infection (MOI) of 0.02 cultures slow growth when infected with lambda but do not collapse, at MOI 2 cultures enter growth stasis. Responsible for synthesis of msDNA (a branched molecule with RNA linked by a 2',5'-phosphodiester bond to ssDNA). The retron transcript serves as primer (from a conserved internal G residue) and template for the reaction, and codes for the RT. The DNA segment is predicted to be 72 bases long. The chain is Retron Se72 reverse transcriptase from Salmonella heidelberg (strain 579083-10).